We begin with the raw amino-acid sequence, 334 residues long: Myo-inositol 2-dehydrogenase (334 aa).

Belongs to the Gfo/Idh/MocA family.

The catalysed reaction is myo-inositol + NAD(+) = scyllo-inosose + NADH + H(+). It functions in the pathway polyol metabolism; myo-inositol metabolism. Functionally, catalyzes the NAD(+)-dependent oxidation of myo-inositol (MI) to 2-keto-myo-inositol (scyllo-inosose), and thus probably functions in a myo-inositol degradation pathway together with IolM, IolN and IolO. Has no activity with scyllo-inositol and much reduced activity (78-fold lower catalytic efficiency) with 1D-chiro-inositol. The sequence is that of Myo-inositol 2-dehydrogenase from Thermotoga maritima (strain ATCC 43589 / DSM 3109 / JCM 10099 / NBRC 100826 / MSB8).